Consider the following 37-residue polypeptide: Cytochrome b6-f complex subunit 5 (37 aa).

A helical transmembrane segment spans residues leucine 5 to alanine 25.

This sequence belongs to the PetG family. As to quaternary structure, the 4 large subunits of the cytochrome b6-f complex are cytochrome b6, subunit IV (17 kDa polypeptide, PetD), cytochrome f and the Rieske protein, while the 4 small subunits are PetG, PetL, PetM and PetN. The complex functions as a dimer.

It is found in the plastid. The protein resides in the chloroplast thylakoid membrane. Its function is as follows. Component of the cytochrome b6-f complex, which mediates electron transfer between photosystem II (PSII) and photosystem I (PSI), cyclic electron flow around PSI, and state transitions. PetG is required for either the stability or assembly of the cytochrome b6-f complex. The protein is Cytochrome b6-f complex subunit 5 of Tupiella akineta (Green alga).